The primary structure comprises 92 residues: Putative septation protein SpoVG (92 aa).

This sequence belongs to the SpoVG family.

Its function is as follows. Could be involved in septation. The protein is Putative septation protein SpoVG of Thermoanaerobacter pseudethanolicus (strain ATCC 33223 / 39E) (Clostridium thermohydrosulfuricum).